Here is a 238-residue protein sequence, read N- to C-terminus: Uridylate kinase (238 aa).

Position 12-15 (12-15 (KLSG)) interacts with ATP. The interval 20–25 (GEKGFG) is involved in allosteric activation by GTP. Residue Gly-54 participates in UMP binding. Positions 55 and 59 each coordinate ATP. UMP-binding positions include Asp-74 and 135-142 (TGSPYFST). Asn-163, Tyr-169, and Asp-172 together coordinate ATP.

It belongs to the UMP kinase family. As to quaternary structure, homohexamer.

The protein resides in the cytoplasm. The catalysed reaction is UMP + ATP = UDP + ADP. It participates in pyrimidine metabolism; CTP biosynthesis via de novo pathway; UDP from UMP (UMPK route): step 1/1. Its activity is regulated as follows. Allosterically activated by GTP. Inhibited by UTP. In terms of biological role, catalyzes the reversible phosphorylation of UMP to UDP. The protein is Uridylate kinase of Lactococcus lactis subsp. lactis (strain IL1403) (Streptococcus lactis).